Consider the following 274-residue polypeptide: Diaminopimelate epimerase (274 aa).

Residues N11, Q44, and N64 each contribute to the substrate site. C73 functions as the Proton donor in the catalytic mechanism. Substrate-binding positions include 74–75 (GN), N157, N190, and 208–209 (ER). C217 functions as the Proton acceptor in the catalytic mechanism. 218 to 219 (GS) is a binding site for substrate.

The protein belongs to the diaminopimelate epimerase family. As to quaternary structure, homodimer.

Its subcellular location is the cytoplasm. The enzyme catalyses (2S,6S)-2,6-diaminopimelate = meso-2,6-diaminopimelate. Its pathway is amino-acid biosynthesis; L-lysine biosynthesis via DAP pathway; DL-2,6-diaminopimelate from LL-2,6-diaminopimelate: step 1/1. Functionally, catalyzes the stereoinversion of LL-2,6-diaminopimelate (L,L-DAP) to meso-diaminopimelate (meso-DAP), a precursor of L-lysine and an essential component of the bacterial peptidoglycan. This Serratia proteamaculans (strain 568) protein is Diaminopimelate epimerase.